The primary structure comprises 458 residues: Protein adenylyltransferase FICD (458 aa).

The Cytoplasmic segment spans residues 1 to 23; that stretch reads MILMPMASVVAVAEPKWVSVWGR. The chain crosses the membrane as a helical; Signal-anchor for type II membrane protein span at residues 24-44; sequence FLWMALLSMALGSLLALLLPL. The Lumenal portion of the chain corresponds to 45–458; the sequence is GVVEEHCLAV…GFKETLPVRP (414 aa). Thr80 bears the O-AMP-threonine; by autocatalysis mark. TPR repeat units lie at residues 106 to 139 and 140 to 173; these read AKAA…DPGF and VDAL…SPFH. An O-AMP-threonine; by autocatalysis modification is found at Thr183. Positions 230 to 235 match the Inhibitory (S/T)XXXE(G/N) motif motif; the sequence is TVAIEG. Glu234 lines the ATP pocket. Residue Asn275 is glycosylated (N-linked (GlcNAc...) asparagine). Residues 285–420 form the Fido domain; sequence VTMDDMLEIH…VRPFIRFIAK (136 aa). 316 to 319 is an ATP binding site; the sequence is VGHH. His363 is an active-site residue. ATP contacts are provided by residues 367-374, 399-400, and Asn407; these read DGNGRTSR and YY.

The protein belongs to the fic family. As to quaternary structure, homodimer. Interacts with HD. It depends on Mg(2+) as a cofactor. Requires Mn(2+) as cofactor. Auto-AMPylated in vitro.

Its subcellular location is the endoplasmic reticulum membrane. The catalysed reaction is L-tyrosyl-[protein] + ATP = O-(5'-adenylyl)-L-tyrosyl-[protein] + diphosphate. It catalyses the reaction 3-O-(5'-adenylyl)-L-threonyl-[protein] + H2O = L-threonyl-[protein] + AMP + H(+). The enzyme catalyses L-threonyl-[protein] + ATP = 3-O-(5'-adenylyl)-L-threonyl-[protein] + diphosphate. With respect to regulation, the side chain of Glu-234 determines which of the two opposing activities (AMPylase or de-AMPylase) will take place. In response to endoplasmic reticulum stress, mediates de-AMPylase activity. Adenylyltransferase activity is inhibited by the inhibitory helix present at the N-terminus: Glu-234 binds ATP and competes with ATP-binding at Arg-374, thereby preventing adenylyltransferase activity. In unstressed cells, disengagement of Glu-234 promotes adenylyltransferase activity. Activation dissociates ATP-binding from Glu-234, allowing ordered binding of the entire ATP moiety with the alpha-phosphate in an orientation that is productive for accepting an incoming target hydroxyl side chain. Its function is as follows. Protein that can both mediate the addition of adenosine 5'-monophosphate (AMP) to specific residues of target proteins (AMPylation), and the removal of the same modification from target proteins (de-AMPylation), depending on the context. The side chain of Glu-231 determines which of the two opposing activities (AMPylase or de-AMPylase) will take place. Acts as a key regulator of the ERN1/IRE1-mediated unfolded protein response (UPR) by mediating AMPylation or de-AMPylation of HSPA5/BiP. In unstressed cells, acts as an adenylyltransferase by mediating AMPylation of HSPA5/BiP at 'Thr-518', thereby inactivating it. In response to endoplasmic reticulum stress, acts as a phosphodiesterase by mediating removal of ATP (de-AMPylation) from HSPA5/BiP at 'Thr-518', leading to restore HSPA5/BiP activity. Although it is able to AMPylate RhoA, Rac and Cdc42 Rho GTPases in vitro, Rho GTPases do not constitute physiological substrates. The polypeptide is Protein adenylyltransferase FICD (Mus musculus (Mouse)).